Reading from the N-terminus, the 340-residue chain is Nitrilase (340 aa).

The 267-residue stretch at 7–273 (IRAAAVQIAP…EGMVVADLDM (267 aa)) folds into the CN hydrolase domain. Catalysis depends on E47, which acts as the Proton acceptor. The active site involves K129. C163 (nucleophile) is an active-site residue.

This sequence belongs to the carbon-nitrogen hydrolase superfamily. Nitrilase family. Forms oligomers.

It catalyses the reaction a nitrile + 2 H2O = a carboxylate + NH4(+). The catalysed reaction is phenylpropanonitrile + 2 H2O = 3-phenylpropanoate + NH4(+). It carries out the reaction an aliphatic nitrile + 2 H2O = a carboxylate + NH4(+). With respect to regulation, highly resistant to various miscible cosolvents and tolerates high substrate concentrations. Its function is as follows. Catalyzes the hydrolysis of a broad range of nitriles to yield their corresponding carboxylic acid and ammonia. In vitro, shows high activity toward benzylic/unsaturated nitriles. The preferred substrate is trans-cinnamonitrile, followed by mono/di-cyanopyridines and aromatic substituted nitriles, with a moderate activity toward 3-phenylpropionitrile. Shows weaker activity toward the common dinitrile fumaronitrile. Also shows weak activity toward some aliphatic nitriles, including adiponitrile and glutaronitrile, and the arylacetonitrile 2-thiopheneacetonitrile. This chain is Nitrilase, found in Paraburkholderia phymatum (strain DSM 17167 / CIP 108236 / LMG 21445 / STM815) (Burkholderia phymatum).